The primary structure comprises 267 residues: Ribosomal RNA small subunit methyltransferase A (267 aa).

Residues asparagine 18, leucine 20, glycine 45, glutamate 66, aspartate 91, and asparagine 112 each coordinate S-adenosyl-L-methionine.

Belongs to the class I-like SAM-binding methyltransferase superfamily. rRNA adenine N(6)-methyltransferase family. RsmA subfamily.

The protein localises to the cytoplasm. The enzyme catalyses adenosine(1518)/adenosine(1519) in 16S rRNA + 4 S-adenosyl-L-methionine = N(6)-dimethyladenosine(1518)/N(6)-dimethyladenosine(1519) in 16S rRNA + 4 S-adenosyl-L-homocysteine + 4 H(+). In terms of biological role, specifically dimethylates two adjacent adenosines (A1518 and A1519) in the loop of a conserved hairpin near the 3'-end of 16S rRNA in the 30S particle. May play a critical role in biogenesis of 30S subunits. This Shewanella sediminis (strain HAW-EB3) protein is Ribosomal RNA small subunit methyltransferase A.